A 194-amino-acid chain; its full sequence is ATP-dependent Clp protease proteolytic subunit (194 aa).

Ser98 functions as the Nucleophile in the catalytic mechanism. Residue His123 is part of the active site.

Belongs to the peptidase S14 family. Fourteen ClpP subunits assemble into 2 heptameric rings which stack back to back to give a disk-like structure with a central cavity, resembling the structure of eukaryotic proteasomes.

The protein localises to the cytoplasm. It catalyses the reaction Hydrolysis of proteins to small peptides in the presence of ATP and magnesium. alpha-casein is the usual test substrate. In the absence of ATP, only oligopeptides shorter than five residues are hydrolyzed (such as succinyl-Leu-Tyr-|-NHMec, and Leu-Tyr-Leu-|-Tyr-Trp, in which cleavage of the -Tyr-|-Leu- and -Tyr-|-Trp bonds also occurs).. In terms of biological role, cleaves peptides in various proteins in a process that requires ATP hydrolysis. Has a chymotrypsin-like activity. Plays a major role in the degradation of misfolded proteins. The sequence is that of ATP-dependent Clp protease proteolytic subunit from Clostridium tetani (strain Massachusetts / E88).